Here is a 565-residue protein sequence, read N- to C-terminus: Oxygen-dependent choline dehydrogenase (565 aa).

6–35 (DYIIVGAGSAGNTLATRLTEDAGVTVLLLE) lines the FAD pocket. The active-site Proton acceptor is the His-475.

It belongs to the GMC oxidoreductase family. It depends on FAD as a cofactor.

The enzyme catalyses choline + A = betaine aldehyde + AH2. The catalysed reaction is betaine aldehyde + NAD(+) + H2O = glycine betaine + NADH + 2 H(+). It functions in the pathway amine and polyamine biosynthesis; betaine biosynthesis via choline pathway; betaine aldehyde from choline (cytochrome c reductase route): step 1/1. In terms of biological role, involved in the biosynthesis of the osmoprotectant glycine betaine. Catalyzes the oxidation of choline to betaine aldehyde and betaine aldehyde to glycine betaine at the same rate. This chain is Oxygen-dependent choline dehydrogenase, found in Pseudomonas putida (strain GB-1).